A 190-amino-acid polypeptide reads, in one-letter code: Crossover junction endodeoxyribonuclease RuvC (190 aa).

Residues Asp-8, Glu-67, and Asp-139 contribute to the active site. The Mg(2+) site is built by Asp-8, Glu-67, and Asp-139.

This sequence belongs to the RuvC family. Homodimer which binds Holliday junction (HJ) DNA. The HJ becomes 2-fold symmetrical on binding to RuvC with unstacked arms; it has a different conformation from HJ DNA in complex with RuvA. In the full resolvosome a probable DNA-RuvA(4)-RuvB(12)-RuvC(2) complex forms which resolves the HJ. Mg(2+) serves as cofactor.

It localises to the cytoplasm. It catalyses the reaction Endonucleolytic cleavage at a junction such as a reciprocal single-stranded crossover between two homologous DNA duplexes (Holliday junction).. In terms of biological role, the RuvA-RuvB-RuvC complex processes Holliday junction (HJ) DNA during genetic recombination and DNA repair. Endonuclease that resolves HJ intermediates. Cleaves cruciform DNA by making single-stranded nicks across the HJ at symmetrical positions within the homologous arms, yielding a 5'-phosphate and a 3'-hydroxyl group; requires a central core of homology in the junction. The consensus cleavage sequence is 5'-(A/T)TT(C/G)-3'. Cleavage occurs on the 3'-side of the TT dinucleotide at the point of strand exchange. HJ branch migration catalyzed by RuvA-RuvB allows RuvC to scan DNA until it finds its consensus sequence, where it cleaves and resolves the cruciform DNA. The polypeptide is Crossover junction endodeoxyribonuclease RuvC (Haemophilus influenzae (strain ATCC 51907 / DSM 11121 / KW20 / Rd)).